The chain runs to 76 residues: Sec-independent protein translocase protein TatA (76 aa).

The chain crosses the membrane as a helical span at residues 1 to 21; that stretch reads MGSFSIWHWLIVLLIVVLVFG. The disordered stretch occupies residues 44–76; the sequence is RDGSTAPADPAQQVTANKSADANTVDVEAKQKS. Residues 55 to 65 show a composition bias toward polar residues; that stretch reads QQVTANKSADA.

The protein belongs to the TatA/E family. As to quaternary structure, the Tat system comprises two distinct complexes: a TatABC complex, containing multiple copies of TatA, TatB and TatC subunits, and a separate TatA complex, containing only TatA subunits. Substrates initially bind to the TatABC complex, which probably triggers association of the separate TatA complex to form the active translocon.

The protein resides in the cell inner membrane. In terms of biological role, part of the twin-arginine translocation (Tat) system that transports large folded proteins containing a characteristic twin-arginine motif in their signal peptide across membranes. TatA could form the protein-conducting channel of the Tat system. This chain is Sec-independent protein translocase protein TatA, found in Methylibium petroleiphilum (strain ATCC BAA-1232 / LMG 22953 / PM1).